The sequence spans 452 residues: Na(+)/H(+) antiporter NhaA (452 aa).

Transmembrane regions (helical) follow at residues 23–43 (MMLF…LSTI), 71–91 (LLQF…GLEI), 108–128 (LPIV…LLVV), 136–156 (GAAI…AVLG), 165–185 (VFLT…IALF), 189–209 (HINI…YLMG), 216–236 (LGLY…SGIH), 316–336 (IVGY…TLGG), 349–369 (VFLG…YGFV), 385–405 (LMAV…IATL), and 418–438 (EAKL…IVTL).

The protein belongs to the NhaA Na(+)/H(+) (TC 2.A.33) antiporter family.

The protein localises to the cell inner membrane. The enzyme catalyses Na(+)(in) + 2 H(+)(out) = Na(+)(out) + 2 H(+)(in). In terms of biological role, na(+)/H(+) antiporter that extrudes sodium in exchange for external protons. This is Na(+)/H(+) antiporter NhaA from Porphyromonas gingivalis (strain ATCC BAA-308 / W83).